We begin with the raw amino-acid sequence, 657 residues long: Acetyl-coenzyme A synthetase (657 aa).

CoA is bound by residues 192–195 and threonine 311; that span reads RRGK. Residues 387–389, 411–416, aspartate 504, arginine 519, and arginine 530 each bind ATP; these read GEP and DTWWQT. Mg(2+) contacts are provided by histidine 543 and valine 546. CoA is bound at residue arginine 592. Lysine 617 is modified (N6-acetyllysine).

Belongs to the ATP-dependent AMP-binding enzyme family. Mg(2+) is required as a cofactor. In terms of processing, acetylated. Deacetylation by the SIR2-homolog deacetylase activates the enzyme.

The catalysed reaction is acetate + ATP + CoA = acetyl-CoA + AMP + diphosphate. Its function is as follows. Catalyzes the conversion of acetate into acetyl-CoA (AcCoA), an essential intermediate at the junction of anabolic and catabolic pathways. AcsA undergoes a two-step reaction. In the first half reaction, AcsA combines acetate with ATP to form acetyl-adenylate (AcAMP) intermediate. In the second half reaction, it can then transfer the acetyl group from AcAMP to the sulfhydryl group of CoA, forming the product AcCoA. This is Acetyl-coenzyme A synthetase from Campylobacter jejuni subsp. jejuni serotype O:2 (strain ATCC 700819 / NCTC 11168).